Consider the following 398-residue polypeptide: Succinate--CoA ligase [ADP-forming] subunit beta (398 aa).

One can recognise an ATP-grasp domain in the interval 9 to 254; it reads KALLKSYGAP…TTEEDDKEIE (246 aa). ATP is bound by residues Lys-46, 53–55, Glu-109, Ala-112, and Glu-117; that span reads GRG. Positions 209 and 223 each coordinate Mg(2+). Substrate contacts are provided by residues Asn-274 and 331-333; that span reads GIM.

Belongs to the succinate/malate CoA ligase beta subunit family. As to quaternary structure, heterotetramer of two alpha and two beta subunits. The cofactor is Mg(2+).

The enzyme catalyses succinate + ATP + CoA = succinyl-CoA + ADP + phosphate. The catalysed reaction is GTP + succinate + CoA = succinyl-CoA + GDP + phosphate. Its pathway is carbohydrate metabolism; tricarboxylic acid cycle; succinate from succinyl-CoA (ligase route): step 1/1. Functionally, succinyl-CoA synthetase functions in the citric acid cycle (TCA), coupling the hydrolysis of succinyl-CoA to the synthesis of either ATP or GTP and thus represents the only step of substrate-level phosphorylation in the TCA. The beta subunit provides nucleotide specificity of the enzyme and binds the substrate succinate, while the binding sites for coenzyme A and phosphate are found in the alpha subunit. In Rhizobium meliloti (strain 1021) (Ensifer meliloti), this protein is Succinate--CoA ligase [ADP-forming] subunit beta.